The sequence spans 311 residues: Cytosolic Fe-S cluster assembly factor Nubp1 homolog (311 aa).

Residues 1–20 (MQAPPPEHCPGVESENAGKG) are disordered. 4 residues coordinate [4Fe-4S] cluster: Cys-9, Cys-23, Cys-26, and Cys-32. 63-70 (GKGGVGKS) lines the ATP pocket. [4Fe-4S] cluster is bound by residues Cys-240 and Cys-243.

It belongs to the Mrp/NBP35 ATP-binding proteins family. NUBP1/NBP35 subfamily. As to quaternary structure, heterotetramer of 2 Nubp1 and 2 Nubp2 chains. It depends on [4Fe-4S] cluster as a cofactor.

It localises to the cytoplasm. Its function is as follows. Component of the cytosolic iron-sulfur (Fe/S) protein assembly (CIA) machinery. Required for maturation of extramitochondrial Fe-S proteins. The Nubp1-Nubp2 heterotetramer forms a Fe-S scaffold complex, mediating the de novo assembly of an Fe-S cluster and its transfer to target apoproteins. The polypeptide is Cytosolic Fe-S cluster assembly factor Nubp1 homolog (Drosophila simulans (Fruit fly)).